The following is a 40-amino-acid chain: ALFLDPPPNLWAEAQSLLEPWANVTLTSQSRLPVLNFQGL.

The N-linked (GlcNAc...) asparagine glycan is linked to asparagine 23.

As to quaternary structure, interacts with CRISP3. In terms of tissue distribution, plasma.

It is found in the secreted. The protein is Alpha-1B-glycoprotein (A1BG) of Sus scrofa (Pig).